A 391-amino-acid polypeptide reads, in one-letter code: 8-amino-7-oxononanoate synthase (391 aa).

Substrate is bound at residue Arg-19. 106-107 (GY) serves as a coordination point for pyridoxal 5'-phosphate. A substrate-binding site is contributed by His-131. Residues Ser-178, His-206, and Thr-234 each contribute to the pyridoxal 5'-phosphate site. Lys-237 bears the N6-(pyridoxal phosphate)lysine mark. Thr-353 is a substrate binding site.

This sequence belongs to the class-II pyridoxal-phosphate-dependent aminotransferase family. BioF subfamily. In terms of assembly, homodimer. The cofactor is pyridoxal 5'-phosphate.

The enzyme catalyses 6-carboxyhexanoyl-[ACP] + L-alanine + H(+) = (8S)-8-amino-7-oxononanoate + holo-[ACP] + CO2. It participates in cofactor biosynthesis; biotin biosynthesis. Functionally, catalyzes the decarboxylative condensation of pimeloyl-[acyl-carrier protein] and L-alanine to produce 8-amino-7-oxononanoate (AON), [acyl-carrier protein], and carbon dioxide. This is 8-amino-7-oxononanoate synthase from Geobacter sulfurreducens (strain ATCC 51573 / DSM 12127 / PCA).